The primary structure comprises 275 residues: Light-independent protochlorophyllide reductase iron-sulfur ATP-binding protein (275 aa).

ATP-binding positions include 12–17 (GIGKST) and Lys-41. Position 16 (Ser-16) interacts with Mg(2+). 2 residues coordinate [4Fe-4S] cluster: Cys-97 and Cys-131. An ATP-binding site is contributed by 182–183 (NR).

It belongs to the NifH/BchL/ChlL family. As to quaternary structure, homodimer. Protochlorophyllide reductase is composed of three subunits; BchL, BchN and BchB. The cofactor is [4Fe-4S] cluster.

The enzyme catalyses chlorophyllide a + oxidized 2[4Fe-4S]-[ferredoxin] + 2 ADP + 2 phosphate = protochlorophyllide a + reduced 2[4Fe-4S]-[ferredoxin] + 2 ATP + 2 H2O. Its pathway is porphyrin-containing compound metabolism; bacteriochlorophyll biosynthesis (light-independent). Component of the dark-operative protochlorophyllide reductase (DPOR) that uses Mg-ATP and reduced ferredoxin to reduce ring D of protochlorophyllide (Pchlide) to form chlorophyllide a (Chlide). This reaction is light-independent. The L component serves as a unique electron donor to the NB-component of the complex, and binds Mg-ATP. The sequence is that of Light-independent protochlorophyllide reductase iron-sulfur ATP-binding protein from Chlorobium limicola (strain DSM 245 / NBRC 103803 / 6330).